A 239-amino-acid chain; its full sequence is Fatty acid metabolism regulator protein (239 aa).

The region spanning 6–74 (QSPAGFAEEY…HGKPTKVNNF (69 aa)) is the HTH gntR-type domain. Residues 34-53 (ERELSELIGVTRTTLREVLQ) constitute a DNA-binding region (H-T-H motif).

As to quaternary structure, homodimer.

It localises to the cytoplasm. Functionally, multifunctional regulator of fatty acid metabolism. This is Fatty acid metabolism regulator protein from Yersinia enterocolitica serotype O:8 / biotype 1B (strain NCTC 13174 / 8081).